The primary structure comprises 238 residues: Large ribosomal subunit protein uL5c (238 aa).

The protein belongs to the universal ribosomal protein uL5 family. As to quaternary structure, part of the 50S ribosomal subunit; contacts the 5S rRNA.

It is found in the plastid. Its subcellular location is the chloroplast. In terms of biological role, binds 5S rRNA, forms part of the central protuberance of the 50S subunit. This chain is Large ribosomal subunit protein uL5c (rpl5), found in Thalassiosira pseudonana (Marine diatom).